A 130-amino-acid chain; its full sequence is Cholecystokinin (130 aa).

A signal peptide spans Met-1–Gly-20. The propeptide occupies Gln-21–Arg-48. The segment at Gln-21–Asp-63 is disordered. At Tyr-112 the chain carries Sulfotyrosine. Phenylalanine amide is present on Phe-118. The propeptide occupies Ser-122–Ser-130. Tyr-126 and Tyr-128 each carry sulfotyrosine.

It belongs to the gastrin/cholecystokinin family. Post-translationally, the precursor is cleaved by proteases to produce a number of active cholecystokinins. As to expression, in the small intestine, the major production site is around the vitelline diverticulum.

The protein resides in the secreted. In terms of biological role, this peptide hormone induces gall bladder contraction and the release of pancreatic enzymes in the gut. Its function in the brain is not clear. It also decreases food intake and regulates gastrointestinal physiological processes. The polypeptide is Cholecystokinin (CCK) (Gallus gallus (Chicken)).